The chain runs to 240 residues: 1-(5-phosphoribosyl)-5-[(5-phosphoribosylamino)methylideneamino] imidazole-4-carboxamide isomerase 1 (240 aa).

The active-site Proton acceptor is Asp-8. The Proton donor role is filled by Asp-129.

It belongs to the HisA/HisF family.

The protein localises to the cytoplasm. It carries out the reaction 1-(5-phospho-beta-D-ribosyl)-5-[(5-phospho-beta-D-ribosylamino)methylideneamino]imidazole-4-carboxamide = 5-[(5-phospho-1-deoxy-D-ribulos-1-ylimino)methylamino]-1-(5-phospho-beta-D-ribosyl)imidazole-4-carboxamide. The protein operates within amino-acid biosynthesis; L-histidine biosynthesis; L-histidine from 5-phospho-alpha-D-ribose 1-diphosphate: step 4/9. This is 1-(5-phosphoribosyl)-5-[(5-phosphoribosylamino)methylideneamino] imidazole-4-carboxamide isomerase 1 from Ruegeria pomeroyi (strain ATCC 700808 / DSM 15171 / DSS-3) (Silicibacter pomeroyi).